The primary structure comprises 25 residues: Inorganic pyrophosphatase (25 aa).

In terms of assembly, monomer. Requires Mg(2+) as cofactor.

It catalyses the reaction diphosphate + H2O = 2 phosphate + H(+). The protein is Inorganic pyrophosphatase of Cyanophora paradoxa.